We begin with the raw amino-acid sequence, 151 residues long: Glycosylation-dependent cell adhesion molecule 1 (151 aa).

An N-terminal signal peptide occupies residues 1–19; it reads MKFFTVLLFVSLAATSLAL. The segment at 29–123 is disordered; it reads MKTQPTDAIP…ENLTKSSQTV (95 aa). The span at 42 to 52 shows a compositional bias: low complexity; it reads STPTSYTSEES. The segment covering 53–71 has biased composition (basic and acidic residues); sequence TSSKDLSKEPSIFREELIS. Phosphoserine occurs at positions 54, 59, 63, and 71. The span at 103-114 shows a compositional bias: low complexity; sequence RPTTSAATTSEE. Asn115 is a glycosylation site (N-linked (GlcNAc...) asparagine).

The protein belongs to the PP3/GlyCAM-1 family. In terms of processing, extensively O-glycosylated. As to expression, lymph nodes. Associated with the lumenal surface of the high endothelial venules of peripheral lymph nodes.

It localises to the cell membrane. Functionally, adhesion molecule that accomplishes cell binding by presenting carbohydrate(s) to the lectin domain of L-selectin. This is Glycosylation-dependent cell adhesion molecule 1 (Glycam1) from Mus musculus (Mouse).